The primary structure comprises 488 residues: GTPase Der (488 aa).

2 EngA-type G domains span residues 3–166 (PVVA…AEAM) and 199–372 (IKLA…DSAT). GTP contacts are provided by residues 9 to 16 (GRPNVGKS), 56 to 60 (DTGGI), 118 to 121 (NKID), 205 to 212 (GKPNVGKS), 252 to 256 (DTAGV), and 317 to 320 (NKWD). One can recognise a KH-like domain in the interval 373 to 457 (RRVSTSMLTR…PIQLRFQEGD (85 aa)).

It belongs to the TRAFAC class TrmE-Era-EngA-EngB-Septin-like GTPase superfamily. EngA (Der) GTPase family. In terms of assembly, associates with the 50S ribosomal subunit.

Functionally, GTPase that plays an essential role in the late steps of ribosome biogenesis. The protein is GTPase Der of Shewanella sp. (strain MR-7).